Reading from the N-terminus, the 721-residue chain is Catalase-peroxidase (721 aa).

The segment at residues 95–223 (WHSAGSYRLF…LGAVHMGLIY (129 aa)) is a cross-link (tryptophyl-tyrosyl-methioninium (Trp-Tyr) (with M-249)). Catalysis depends on histidine 96, which acts as the Proton acceptor. Positions 223-249 (YVNPQGRDGKPDPLKSAHDVRVTFKRM) form a cross-link, tryptophyl-tyrosyl-methioninium (Tyr-Met) (with W-95). Heme b is bound at residue histidine 264.

This sequence belongs to the peroxidase family. Peroxidase/catalase subfamily. As to quaternary structure, homodimer or homotetramer. Requires heme b as cofactor. Post-translationally, formation of the three residue Trp-Tyr-Met cross-link is important for the catalase, but not the peroxidase activity of the enzyme.

The enzyme catalyses H2O2 + AH2 = A + 2 H2O. It carries out the reaction 2 H2O2 = O2 + 2 H2O. Its function is as follows. Bifunctional enzyme with both catalase and broad-spectrum peroxidase activity. This is Catalase-peroxidase from Parvibaculum lavamentivorans (strain DS-1 / DSM 13023 / NCIMB 13966).